The primary structure comprises 1439 residues: Gag-Pol polyprotein (1439 aa).

G2 is lipidated: N-myristoyl glycine; by host. An interaction with Gp41 region spans residues 7–31; sequence VLSGGELDRWEKIRLRPGGKKKYRL. The interaction with host CALM1 stretch occupies residues 8–43; sequence LSGGELDRWEKIRLRPGGKKKYRLKHIVWASRELER. The segment at 12–19 is interaction with host AP3D1; that stretch reads ELDRWEKI. The interval 14–33 is interaction with membrane phosphatidylinositol 4,5-bisphosphate and RNA; that stretch reads DRWEKIRLRPGGKKKYRLKH. A Nuclear export signal motif is present at residues 16-22; that stretch reads WEKIRLR. The Nuclear localization signal motif lies at 26 to 32; that stretch reads KKKYRLK. Residues 73 to 77 form an interaction with membrane phosphatidylinositol 4,5-bisphosphate region; the sequence is EELTS. Residues 106 to 128 are disordered; sequence EEQTKSMKKAQQAAADTGNSSQV. Y132 carries the phosphotyrosine; by host modification. Positions 189–227 are interaction with human PPIA/CYPA and NUP153; it reads NTVGGHQAAMQMLKETINEEAAEWDRLHPVHAGPIAPGQ. The tract at residues 277–363 is dimerization/Multimerization of capsid protein p24; the sequence is YSPVSILDIR…GGPGHKARVL (87 aa). CCHC-type zinc fingers lie at residues 390–407 and 411–428; these read VKCF…NCRA and KGCW…ECTE. Positions 493 to 497 are dimerization of protease; that stretch reads PQITL. Positions 512 to 581 constitute a Peptidase A2 domain; it reads KEALLDTGAD…TPVNIIGRNL (70 aa). D517 (for protease activity; shared with dimeric partner) is an active-site residue. Dimerization of protease regions lie at residues 541–547 and 580–592; these read GIGGFIK and NLLT…LNFP. One can recognise a Reverse transcriptase domain in the interval 635–825; the sequence is EGKISKIGPE…PPFLWMGYEL (191 aa). Mg(2+) is bound by residues D701, D776, and D777. An RT 'primer grip' region spans residues 818-826; sequence FLWMGYELH. Residues 989 to 1005 carry the Tryptophan repeat motif motif; that stretch reads WETWWTEYWQATWIPEW. Residues 1025–1148 enclose the RNase H type-1 domain; that stretch reads IVGAETFYVD…VDKLVSAGIR (124 aa). Residues D1034, E1069, D1089, and D1140 each contribute to the Mg(2+) site. Residues 1154 to 1195 form an Integrase-type zinc finger; it reads DGIDKAQEDHEKYHSNWRAMASDFNLPPIVAKEIVASCDKCQ. Zn(2+) is bound by residues H1163, H1167, C1191, and C1194. Residues 1205-1355 enclose the Integrase catalytic domain; it reads VDCSPGIWQL…SAGERIIDII (151 aa). Residues D1215, D1267, and E1303 each contribute to the Mg(2+) site. A DNA-binding region (integrase-type) is located at residues 1374–1421; it reads FRVYYRDNRDPIWKGPAKLLWKGEGAVVIQDNSDIKVVPRRKVKIIRD.

In terms of assembly, homotrimer; further assembles as hexamers of trimers. Interacts with gp41 (via C-terminus). Interacts with host CALM1; this interaction induces a conformational change in the Matrix protein, triggering exposure of the myristate group. Interacts with host AP3D1; this interaction allows the polyprotein trafficking to multivesicular bodies during virus assembly. Part of the pre-integration complex (PIC) which is composed of viral genome, matrix protein, Vpr and integrase. As to quaternary structure, homodimer; the homodimer further multimerizes as homohexamers or homopentamers. Interacts with human PPIA/CYPA; This interaction stabilizes the capsid. Interacts with human NUP153. Interacts with host PDZD8; this interaction stabilizes the capsid. Interacts with monkey TRIM5; this interaction destabilizes the capsid. Homodimer, whose active site consists of two apposed aspartic acid residues. In terms of assembly, heterodimer of p66 RT and p51 RT (RT p66/p51). Heterodimerization of RT is essential for DNA polymerase activity. The overall folding of the subdomains is similar in p66 RT and p51 RT but the spatial arrangements of the subdomains are dramatically different. As to quaternary structure, homotetramer; may further associate as a homohexadecamer. Part of the pre-integration complex (PIC) which is composed of viral genome, matrix protein, Vpr and integrase. Interacts with human SMARCB1/INI1 and human PSIP1/LEDGF isoform 1. Interacts with human KPNA3; this interaction might play a role in nuclear import of the pre-integration complex. Interacts with human NUP153; this interaction might play a role in nuclear import of the pre-integration complex. It depends on Mg(2+) as a cofactor. In terms of processing, specific enzymatic cleavages by the viral protease yield mature proteins. The protease is released by autocatalytic cleavage. The polyprotein is cleaved during and after budding, this process is termed maturation. Proteolytic cleavage of p66 RT removes the RNase H domain to yield the p51 RT subunit. Nucleocapsid protein p7 might be further cleaved after virus entry. Tyrosine phosphorylated presumably in the virion by a host kinase. Phosphorylation is apparently not a major regulator of membrane association. Post-translationally, phosphorylated possibly by host MAPK1; this phosphorylation is necessary for Pin1-mediated virion uncoating. In terms of processing, methylated by host PRMT6, impairing its function by reducing RNA annealing and the initiation of reverse transcription.

The protein localises to the host cell membrane. The protein resides in the host endosome. It localises to the host multivesicular body. Its subcellular location is the virion membrane. It is found in the host nucleus. The protein localises to the host cytoplasm. The protein resides in the virion. The catalysed reaction is Specific for a P1 residue that is hydrophobic, and P1' variable, but often Pro.. It catalyses the reaction Endohydrolysis of RNA in RNA/DNA hybrids. Three different cleavage modes: 1. sequence-specific internal cleavage of RNA. Human immunodeficiency virus type 1 and Moloney murine leukemia virus enzymes prefer to cleave the RNA strand one nucleotide away from the RNA-DNA junction. 2. RNA 5'-end directed cleavage 13-19 nucleotides from the RNA end. 3. DNA 3'-end directed cleavage 15-20 nucleotides away from the primer terminus.. The enzyme catalyses 3'-end directed exonucleolytic cleavage of viral RNA-DNA hybrid.. It carries out the reaction DNA(n) + a 2'-deoxyribonucleoside 5'-triphosphate = DNA(n+1) + diphosphate. Its activity is regulated as follows. Protease: The viral protease is inhibited by many synthetic protease inhibitors (PIs), such as amprenavir, atazanavir, indinavir, loprinavir, nelfinavir, ritonavir and saquinavir. Use of protease inhibitors in tritherapy regimens permit more ambitious therapeutic strategies. Reverse transcriptase/ribonuclease H: RT can be inhibited either by nucleoside RT inhibitors (NRTIs) or by non nucleoside RT inhibitors (NNRTIs). NRTIs act as chain terminators, whereas NNRTIs inhibit DNA polymerization by binding a small hydrophobic pocket near the RT active site and inducing an allosteric change in this region. Classical NRTIs are abacavir, adefovir (PMEA), didanosine (ddI), lamivudine (3TC), stavudine (d4T), tenofovir (PMPA), zalcitabine (ddC), and zidovudine (AZT). Classical NNRTIs are atevirdine (BHAP U-87201E), delavirdine, efavirenz (DMP-266), emivirine (I-EBU), and nevirapine (BI-RG-587). The tritherapies used as a basic effective treatment of AIDS associate two NRTIs and one NNRTI. Mediates, with Gag polyprotein, the essential events in virion assembly, including binding the plasma membrane, making the protein-protein interactions necessary to create spherical particles, recruiting the viral Env proteins, and packaging the genomic RNA via direct interactions with the RNA packaging sequence (Psi). Gag-Pol polyprotein may regulate its own translation, by the binding genomic RNA in the 5'-UTR. At low concentration, the polyprotein would promote translation, whereas at high concentration, the polyprotein would encapsidate genomic RNA and then shut off translation. Functionally, targets the polyprotein to the plasma membrane via a multipartite membrane-binding signal, that includes its myristoylated N-terminus. Matrix protein is part of the pre-integration complex. Implicated in the release from host cell mediated by Vpu. Binds to RNA. Its function is as follows. Forms the conical core that encapsulates the genomic RNA-nucleocapsid complex in the virion. Most core are conical, with only 7% tubular. The core is constituted by capsid protein hexamer subunits. The core is disassembled soon after virion entry. Host restriction factors such as TRIM5-alpha or TRIMCyp bind retroviral capsids and cause premature capsid disassembly, leading to blocks in reverse transcription. Capsid restriction by TRIM5 is one of the factors which restricts HIV-1 to the human species. Host PIN1 apparently facilitates the virion uncoating. On the other hand, interactions with PDZD8 or CYPA stabilize the capsid. In terms of biological role, encapsulates and protects viral dimeric unspliced genomic RNA (gRNA). Binds these RNAs through its zinc fingers. Acts as a nucleic acid chaperone which is involved in rearangement of nucleic acid secondary structure during gRNA retrotranscription. Also facilitates template switch leading to recombination. As part of the polyprotein, participates in gRNA dimerization, packaging, tRNA incorporation and virion assembly. Aspartyl protease that mediates proteolytic cleavages of Gag and Gag-Pol polyproteins during or shortly after the release of the virion from the plasma membrane. Cleavages take place as an ordered, step-wise cascade to yield mature proteins. This process is called maturation. Displays maximal activity during the budding process just prior to particle release from the cell. Also cleaves Nef and Vif, probably concomitantly with viral structural proteins on maturation of virus particles. Hydrolyzes host EIF4GI and PABP1 in order to shut off the capped cellular mRNA translation. The resulting inhibition of cellular protein synthesis serves to ensure maximal viral gene expression and to evade host immune response. Also mediates cleavage of host YTHDF3. Mediates cleavage of host CARD8, thereby activating the CARD8 inflammasome, leading to the clearance of latent HIV-1 in patient CD4(+) T-cells after viral reactivation; in contrast, HIV-1 can evade CARD8-sensing when its protease remains inactive in infected cells prior to viral budding. Functionally, multifunctional enzyme that converts the viral RNA genome into dsDNA in the cytoplasm, shortly after virus entry into the cell. This enzyme displays a DNA polymerase activity that can copy either DNA or RNA templates, and a ribonuclease H (RNase H) activity that cleaves the RNA strand of RNA-DNA heteroduplexes in a partially processive 3' to 5' endonucleasic mode. Conversion of viral genomic RNA into dsDNA requires many steps. A tRNA(3)-Lys binds to the primer-binding site (PBS) situated at the 5'-end of the viral RNA. RT uses the 3' end of the tRNA primer to perform a short round of RNA-dependent minus-strand DNA synthesis. The reading proceeds through the U5 region and ends after the repeated (R) region which is present at both ends of viral RNA. The portion of the RNA-DNA heteroduplex is digested by the RNase H, resulting in a ssDNA product attached to the tRNA primer. This ssDNA/tRNA hybridizes with the identical R region situated at the 3' end of viral RNA. This template exchange, known as minus-strand DNA strong stop transfer, can be either intra- or intermolecular. RT uses the 3' end of this newly synthesized short ssDNA to perform the RNA-dependent minus-strand DNA synthesis of the whole template. RNase H digests the RNA template except for two polypurine tracts (PPTs) situated at the 5'-end and near the center of the genome. It is not clear if both polymerase and RNase H activities are simultaneous. RNase H probably can proceed both in a polymerase-dependent (RNA cut into small fragments by the same RT performing DNA synthesis) and a polymerase-independent mode (cleavage of remaining RNA fragments by free RTs). Secondly, RT performs DNA-directed plus-strand DNA synthesis using the PPTs that have not been removed by RNase H as primers. PPTs and tRNA primers are then removed by RNase H. The 3' and 5' ssDNA PBS regions hybridize to form a circular dsDNA intermediate. Strand displacement synthesis by RT to the PBS and PPT ends produces a blunt ended, linear dsDNA copy of the viral genome that includes long terminal repeats (LTRs) at both ends. Its function is as follows. Catalyzes viral DNA integration into the host chromosome, by performing a series of DNA cutting and joining reactions. This enzyme activity takes place after virion entry into a cell and reverse transcription of the RNA genome in dsDNA. The first step in the integration process is 3' processing. This step requires a complex comprising the viral genome, matrix protein, Vpr and integrase. This complex is called the pre-integration complex (PIC). The integrase protein removes 2 nucleotides from each 3' end of the viral DNA, leaving recessed CA OH's at the 3' ends. In the second step, the PIC enters cell nucleus. This process is mediated through integrase and Vpr proteins, and allows the virus to infect a non dividing cell. This ability to enter the nucleus is specific of lentiviruses, other retroviruses cannot and rely on cell division to access cell chromosomes. In the third step, termed strand transfer, the integrase protein joins the previously processed 3' ends to the 5' ends of strands of target cellular DNA at the site of integration. The 5'-ends are produced by integrase-catalyzed staggered cuts, 5 bp apart. A Y-shaped, gapped, recombination intermediate results, with the 5'-ends of the viral DNA strands and the 3' ends of target DNA strands remaining unjoined, flanking a gap of 5 bp. The last step is viral DNA integration into host chromosome. This involves host DNA repair synthesis in which the 5 bp gaps between the unjoined strands are filled in and then ligated. Since this process occurs at both cuts flanking the HIV genome, a 5 bp duplication of host DNA is produced at the ends of HIV-1 integration. Alternatively, Integrase may catalyze the excision of viral DNA just after strand transfer, this is termed disintegration. This chain is Gag-Pol polyprotein (gag-pol), found in Human immunodeficiency virus type 1 group M subtype B (isolate JRCSF) (HIV-1).